The primary structure comprises 868 residues: Translation initiation factor IF-2 (868 aa).

Disordered regions lie at residues 158-178 (VKEEEKINSEENTAESQDELT) and 200-269 (KKEE…KYRE). Basic and acidic residues predominate over residues 200–209 (KKEEVKPEKV). A compositionally biased stretch (basic residues) spans 249-260 (RGGRSKFKKKKG). The tr-type G domain maps to 368–537 (GRAPVVTIMG…LLQSEVLELK (170 aa)). The tract at residues 377 to 384 (GHVDHGKT) is G1. A GTP-binding site is contributed by 377-384 (GHVDHGKT). Positions 402–406 (GITQH) are G2. The interval 423–426 (DTPG) is G3. GTP is bound by residues 423–427 (DTPGH) and 477–480 (NKMD). Residues 477-480 (NKMD) are G4. The G5 stretch occupies residues 513 to 515 (SAK).

This sequence belongs to the TRAFAC class translation factor GTPase superfamily. Classic translation factor GTPase family. IF-2 subfamily.

The protein resides in the cytoplasm. One of the essential components for the initiation of protein synthesis. Protects formylmethionyl-tRNA from spontaneous hydrolysis and promotes its binding to the 30S ribosomal subunits. Also involved in the hydrolysis of GTP during the formation of the 70S ribosomal complex. This chain is Translation initiation factor IF-2, found in Legionella pneumophila (strain Lens).